We begin with the raw amino-acid sequence, 308 residues long: GTP cyclohydrolase MptA (308 aa).

The tract at residues 282–308 is disordered; the sequence is NDESIHQHNAHAEREVTLGQLRDELDA.

The protein belongs to the GTP cyclohydrolase IV family. In terms of assembly, homodimer. The cofactor is Fe(2+).

It catalyses the reaction GTP + H2O = 7,8-dihydroneopterin 2',3'-cyclic phosphate + formate + diphosphate + H(+). It functions in the pathway cofactor biosynthesis; 5,6,7,8-tetrahydromethanopterin biosynthesis. Functionally, converts GTP to 7,8-dihydro-D-neopterin 2',3'-cyclic phosphate, the first intermediate in the biosynthesis of coenzyme methanopterin. Involved in archaeosine (G(+)) and folate biosynthesis. The protein is GTP cyclohydrolase MptA of Haloferax volcanii (strain ATCC 29605 / DSM 3757 / JCM 8879 / NBRC 14742 / NCIMB 2012 / VKM B-1768 / DS2) (Halobacterium volcanii).